Reading from the N-terminus, the 317-residue chain is uncharacterized protein (317 aa).

7 helical membrane passes run phenylalanine 18–isoleucine 38, isoleucine 58–phenylalanine 78, phenylalanine 92–phenylalanine 112, leucine 130–valine 150, leucine 159–proline 179, cysteine 202–valine 222, and asparagine 252–alanine 272.

Belongs to the CbiQ family.

It is found in the cell membrane. This is an uncharacterized protein from Mycoplasma genitalium (strain ATCC 33530 / DSM 19775 / NCTC 10195 / G37) (Mycoplasmoides genitalium).